The sequence spans 283 residues: Bifunctional protein FolD (283 aa).

NADP(+) contacts are provided by residues 166–168 (GRS) and Ser-191.

Belongs to the tetrahydrofolate dehydrogenase/cyclohydrolase family. Homodimer.

The enzyme catalyses (6R)-5,10-methylene-5,6,7,8-tetrahydrofolate + NADP(+) = (6R)-5,10-methenyltetrahydrofolate + NADPH. It carries out the reaction (6R)-5,10-methenyltetrahydrofolate + H2O = (6R)-10-formyltetrahydrofolate + H(+). It functions in the pathway one-carbon metabolism; tetrahydrofolate interconversion. Catalyzes the oxidation of 5,10-methylenetetrahydrofolate to 5,10-methenyltetrahydrofolate and then the hydrolysis of 5,10-methenyltetrahydrofolate to 10-formyltetrahydrofolate. In Pediococcus pentosaceus (strain ATCC 25745 / CCUG 21536 / LMG 10740 / 183-1w), this protein is Bifunctional protein FolD.